A 1092-amino-acid polypeptide reads, in one-letter code: Probable cellulose synthase A catalytic subunit 5 [UDP-forming] (1092 aa).

The Cytoplasmic segment spans residues 1–279; the sequence is MEASAGLVAG…SSSLVNPYRM (279 aa). 8 residues coordinate Zn(2+): Cys39, Cys42, Cys58, Cys61, Cys66, Cys69, Cys81, and Cys84. An RING-type; degenerate zinc finger spans residues 39–85; that stretch reads CQICGDDVGLTPDGEPFVACNECAFPVCRDCYEYERREGTQNCPQCK. A helical membrane pass occupies residues 280–300; it reads IIIIRLVVLGFFFHYRVMHPV. The Extracellular portion of the chain corresponds to 301–302; sequence PD. Residues 303 to 323 traverse the membrane as a helical segment; sequence AFALWLISVICEIWFAMSWIL. Residues 324 to 868 lie on the Cytoplasmic side of the membrane; it reads DQFPKWFPIE…CLERFSYINS (545 aa). UDP-alpha-D-glucose is bound by residues Ser362, Lys368, Glu369, and Asp398. Asp398 is a catalytic residue. Positions 450-479 form a coiled coil; that stretch reads NFVRERRAMKREYEEFKVRINALVAKAQKV. Residue Lys539 participates in UDP-alpha-D-glucose binding. Residues Lys540 and Asp564 each contribute to the Mn(2+) site. The active site involves Asp792. Residues 869 to 889 traverse the membrane as a helical segment; that stretch reads IVYPWTSIPLLAYCTLPAICL. Topologically, residues 890–901 are extracellular; the sequence is LTGKFITPELTN. A helical membrane pass occupies residues 902–922; it reads IASLWFMSLFICIFATGILEM. At 923–938 the chain is on the cytoplasmic side; it reads RWSGVGIDDWWRNEQF. A helical membrane pass occupies residues 939–959; sequence WVIGGVSSHLFAVFQGLLKVI. Residues 960–987 lie on the Extracellular side of the membrane; it reads AGIDTSFTVTSKGGDDEEFSELYTFKWT. Residues 988-1008 form a helical membrane-spanning segment; sequence TLLIPPTTLLLLNFIGVVAGV. Over 1009-1019 the chain is Cytoplasmic; that stretch reads SNAINNGYESW. A helical membrane pass occupies residues 1020 to 1040; sequence GPLFGKLFFAFWVIVHLYPFL. Residues 1041–1049 lie on the Extracellular side of the membrane; it reads KGLVGRQNR. A helical transmembrane segment spans residues 1050 to 1070; it reads TPTIVIVWSILLASIFSLLWV. At 1071–1092 the chain is on the cytoplasmic side; sequence RIDPFLAKNDGPLLEECGLDCN.

Belongs to the glycosyltransferase 2 family. Plant cellulose synthase subfamily. Requires Mn(2+) as cofactor. The cofactor is Zn(2+).

The protein resides in the cell membrane. It catalyses the reaction [(1-&gt;4)-beta-D-glucosyl](n) + UDP-alpha-D-glucose = [(1-&gt;4)-beta-D-glucosyl](n+1) + UDP + H(+). It participates in glycan metabolism; plant cellulose biosynthesis. Functionally, probable catalytic subunit of cellulose synthase terminal complexes ('rosettes'), required for beta-1,4-glucan microfibril crystallization, a major mechanism of the cell wall formation. The sequence is that of Probable cellulose synthase A catalytic subunit 5 [UDP-forming] (CESA5) from Oryza sativa subsp. indica (Rice).